The chain runs to 113 residues: Large ribosomal subunit protein bL17 (113 aa).

The protein belongs to the bacterial ribosomal protein bL17 family. As to quaternary structure, part of the 50S ribosomal subunit. Contacts protein L32.

The protein is Large ribosomal subunit protein bL17 of Clostridium botulinum (strain Loch Maree / Type A3).